Reading from the N-terminus, the 841-residue chain is Probable outer membrane usher protein EcpC (841 aa).

The signal sequence occupies residues 1-29; it reads MPLRRFSPGLKAQFAFGMVFLFVQPDASA.

This sequence belongs to the EcpC/MatD family.

Functionally, part of the ecpRABCDE operon, which encodes the E.coli common pilus (ECP). ECP is found in both commensal and pathogenic strains and plays a dual role in early-stage biofilm development and host cell recognition. The sequence is that of Probable outer membrane usher protein EcpC (ecpC) from Escherichia coli O6:H1 (strain CFT073 / ATCC 700928 / UPEC).